Consider the following 380-residue polypeptide: DNA replication and repair protein RecF (380 aa).

30–37 (GPNGFGKT) lines the ATP pocket.

It belongs to the RecF family.

The protein localises to the cytoplasm. Functionally, the RecF protein is involved in DNA metabolism; it is required for DNA replication and normal SOS inducibility. RecF binds preferentially to single-stranded, linear DNA. It also seems to bind ATP. The protein is DNA replication and repair protein RecF of Mycobacterium sp. (strain KMS).